Reading from the N-terminus, the 309-residue chain is Succinoglycan biosynthesis protein ExoM (309 aa).

It belongs to the glycosyltransferase 2 family.

It is found in the cell inner membrane. The protein operates within glycan metabolism; exopolysaccharide biosynthesis. Functionally, glycosyltransferase required for the synthesis of succinoglycan (EPS I). Needed for the addition of the fourth sugar (glucose), catalyzes the formation of a beta-1,4 linkage between the third acetylated sugar and the fourth sugar. In Rhizobium meliloti (strain 1021) (Ensifer meliloti), this protein is Succinoglycan biosynthesis protein ExoM (exoM).